We begin with the raw amino-acid sequence, 154 residues long: Flagellar assembly factor FliW (154 aa).

It belongs to the FliW family. In terms of assembly, interacts with translational regulator CsrA and flagellin(s).

It localises to the cytoplasm. Acts as an anti-CsrA protein, binds CsrA and prevents it from repressing translation of its target genes, one of which is flagellin. Binds to flagellin and participates in the assembly of the flagellum. This chain is Flagellar assembly factor FliW, found in Carboxydothermus hydrogenoformans (strain ATCC BAA-161 / DSM 6008 / Z-2901).